The sequence spans 207 residues: Oligoribonuclease (207 aa).

The region spanning 8 to 172 is the Exonuclease domain; it reads LVWIDCEMTG…ADILESVREL (165 aa). Tyr129 is an active-site residue.

This sequence belongs to the oligoribonuclease family.

It is found in the cytoplasm. In terms of biological role, 3'-to-5' exoribonuclease specific for small oligoribonucleotides. The chain is Oligoribonuclease from Leifsonia xyli subsp. xyli (strain CTCB07).